We begin with the raw amino-acid sequence, 383 residues long: MLYSPRLTDQILIVAGEASADLHAARTLHELQRLRPGITAFGVGGPRLREAGLEALAPAEDISVMGLAEVLPRIPRILGILRMLGRAAAERRPRAALLVDLPDFNLRLAARLKKLGIPVVYYVSPTIWAWRQGRAKKIARVVDRMLCILPFEERFYEGTGVSARFVGHPFAERPPPGPAEAYRSALGLPASRTTIAMVPGSRPSELKRLLPPMLQAAERLRAAHPDAQFVVPVAPTLDRAALEPYLAAHRTLEVRLVDGRTEEVVGASDAALVKSGTSTLEAGLMLRPMVVVYKLSWLSYAVARMLVKIAHVALVNILAGRGIVPELLQGDASPERMAAEVEHLLGDRAAREAQIAALREVRASLGEPGAPLRVAEEVLGVMR.

The protein belongs to the LpxB family.

The catalysed reaction is a lipid X + a UDP-2-N,3-O-bis[(3R)-3-hydroxyacyl]-alpha-D-glucosamine = a lipid A disaccharide + UDP + H(+). It participates in bacterial outer membrane biogenesis; LPS lipid A biosynthesis. Condensation of UDP-2,3-diacylglucosamine and 2,3-diacylglucosamine-1-phosphate to form lipid A disaccharide, a precursor of lipid A, a phosphorylated glycolipid that anchors the lipopolysaccharide to the outer membrane of the cell. The chain is Lipid-A-disaccharide synthase from Anaeromyxobacter sp. (strain K).